A 286-amino-acid polypeptide reads, in one-letter code: NADPH-dependent 7-cyano-7-deazaguanine reductase (286 aa).

Ile92–Ser94 contributes to the substrate binding site. Residue Ser94–Lys95 participates in NADPH binding. The active-site Thioimide intermediate is the Cys194. Asp201 (proton donor) is an active-site residue. His233 to Glu234 contacts substrate. Arg262 to Gly263 contacts NADPH.

Belongs to the GTP cyclohydrolase I family. QueF type 2 subfamily. As to quaternary structure, homodimer.

It localises to the cytoplasm. The catalysed reaction is 7-aminomethyl-7-carbaguanine + 2 NADP(+) = 7-cyano-7-deazaguanine + 2 NADPH + 3 H(+). It participates in tRNA modification; tRNA-queuosine biosynthesis. In terms of biological role, catalyzes the NADPH-dependent reduction of 7-cyano-7-deazaguanine (preQ0) to 7-aminomethyl-7-deazaguanine (preQ1). In Shewanella sp. (strain MR-4), this protein is NADPH-dependent 7-cyano-7-deazaguanine reductase.